The primary structure comprises 221 residues: Uracil-DNA glycosylase (221 aa).

Asp-63 serves as the catalytic Proton acceptor.

Belongs to the uracil-DNA glycosylase (UDG) superfamily. UNG family.

The protein localises to the cytoplasm. It carries out the reaction Hydrolyzes single-stranded DNA or mismatched double-stranded DNA and polynucleotides, releasing free uracil.. Functionally, excises uracil residues from the DNA which can arise as a result of misincorporation of dUMP residues by DNA polymerase or due to deamination of cytosine. The polypeptide is Uracil-DNA glycosylase (Blochmanniella floridana).